The following is a 103-amino-acid chain: Integration host factor subunit beta (103 aa).

Positions 59–82 (RLGRNPKTGESVALPGKHVPHFKP) are disordered.

The protein belongs to the bacterial histone-like protein family. In terms of assembly, heterodimer of an alpha and a beta chain.

Functionally, this protein is one of the two subunits of integration host factor, a specific DNA-binding protein that functions in genetic recombination as well as in transcriptional and translational control. In Xanthomonas oryzae pv. oryzae (strain MAFF 311018), this protein is Integration host factor subunit beta.